Consider the following 79-residue polypeptide: Small ribosomal subunit protein bS18B (79 aa).

A compositionally biased stretch (basic and acidic residues) spans 1–11 (MPRPRKADRTP). A disordered region spans residues 1 to 24 (MPRPRKADRTPARQRPNPLDRDGV).

This sequence belongs to the bacterial ribosomal protein bS18 family. Part of the 30S ribosomal subunit. Forms a tight heterodimer with protein bS6.

Binds as a heterodimer with protein bS6 to the central domain of the 16S rRNA, where it helps stabilize the platform of the 30S subunit. This Streptomyces coelicolor (strain ATCC BAA-471 / A3(2) / M145) protein is Small ribosomal subunit protein bS18B.